The chain runs to 66 residues: DNA gyrase inhibitor YacG (66 aa).

Cys10, Cys13, Cys29, and Cys33 together coordinate Zn(2+).

Belongs to the DNA gyrase inhibitor YacG family. In terms of assembly, interacts with GyrB. Requires Zn(2+) as cofactor.

Its function is as follows. Inhibits all the catalytic activities of DNA gyrase by preventing its interaction with DNA. Acts by binding directly to the C-terminal domain of GyrB, which probably disrupts DNA binding by the gyrase. This chain is DNA gyrase inhibitor YacG, found in Edwardsiella ictaluri (strain 93-146).